A 557-amino-acid polypeptide reads, in one-letter code: Ras-specific guanine nucleotide-releasing factor RalGPS2 (557 aa).

The Ras-GEF domain occupies 49–287 (TPEEYAGQIT…YKLSLKIEPG (239 aa)). Positions 283-314 (KIEPGTSTPRSAASREDLVGPEVGASPQSGRK) are disordered. Ser293, Ser296, Ser308, and Ser311 each carry phosphoserine. Thr326 carries the phosphothreonine modification. The PXXP motif lies at 327-330 (PPSP). Phosphoserine is present on residues Ser329 and Ser343. At Thr361 the chain carries Phosphothreonine. The disordered stretch occupies residues 368–409 (RHLLDDSVMEPHAPSRGQAESSTLSSGISIGSSDGSELSEET). At Ser374 the chain carries Phosphoserine. Residues 387 to 403 (ESSTLSSGISIGSSDGS) show a composition bias toward low complexity. The region spanning 431–543 (AVTIQGVLRR…WFKHLSAACQ (113 aa)) is the PH domain. The tract at residues 433 to 557 (TIQGVLRRKT…QVPTNLMTFE (125 aa)) is required for stimulation of nucleotide exchange by RALA.

As to quaternary structure, interacts with the SH3 domains of GRB2 and PLCG1. Interacts with RALA.

It localises to the cytoplasm. It is found in the cell membrane. In terms of biological role, guanine nucleotide exchange factor for the small GTPase RALA. May be involved in cytoskeletal organization. May also be involved in the stimulation of transcription in a Ras-independent fashion. This chain is Ras-specific guanine nucleotide-releasing factor RalGPS2 (RALGPS2), found in Macaca fascicularis (Crab-eating macaque).